A 2210-amino-acid chain; its full sequence is RNA-directed RNA polymerase L (2210 aa).

Positions 26–285 are endonuclease; sequence KAIFLSQTKL…KCAIMSEEDS (260 aa). Mn(2+) is bound by residues glutamate 51, aspartate 88, and glutamate 101. Lysine 114 is an active-site residue. The region spanning 1163–1359 is the RdRp catalytic domain; it reads LDMKSVVRQG…FLSDKLNKFV (197 aa). Position 1319 (aspartate 1319) interacts with Mg(2+).

This sequence belongs to the Bunyavirales RNA polymerase family. As to quaternary structure, homomultimer; the oligomeric structure is essential for the polymerase activity. Interacts with nucleoprotein N. Interacts with protein Z; this interaction inhibits viral transcription and replication, Z partially blocks the product exit tunnel for the releasing nascent RNA product. The cofactor is Mn(2+). It depends on Mg(2+) as a cofactor.

It localises to the virion. Its subcellular location is the host cytoplasm. The enzyme catalyses RNA(n) + a ribonucleoside 5'-triphosphate = RNA(n+1) + diphosphate. In terms of biological role, RNA-dependent RNA polymerase, which is responsible for the replication and transcription of the viral RNA genome using antigenomic RNA as an intermediate. During transcription, synthesizes subgenomic RNAs and assures their capping by a cap-snatching mechanism, which involves the endonuclease activity cleaving the host capped pre-mRNAs. These short capped RNAs are then used as primers for viral transcription. The 3'-end of subgenomic mRNAs molecules are heterogeneous and not polyadenylated. The replicase function is to direct synthesis of antigenomic and genomic RNA which are encapsidated and non capped. As a consequence of the use of the same enzyme for both transcription and replication, these mechanisms need to be well coordinated. These processes may be regulated by proteins N and Z in a dose-dependent manner. Z protein inhibits the viral polymerase L und thus the viral transcription and RNA synthesis. The protein is RNA-directed RNA polymerase L of Sigmodon alstoni (PIRV).